The sequence spans 288 residues: Bifunctional protein FolD (288 aa).

NADP(+) is bound by residues 166–168 (GAS) and Ile-232.

This sequence belongs to the tetrahydrofolate dehydrogenase/cyclohydrolase family. As to quaternary structure, homodimer.

The enzyme catalyses (6R)-5,10-methylene-5,6,7,8-tetrahydrofolate + NADP(+) = (6R)-5,10-methenyltetrahydrofolate + NADPH. The catalysed reaction is (6R)-5,10-methenyltetrahydrofolate + H2O = (6R)-10-formyltetrahydrofolate + H(+). Its pathway is one-carbon metabolism; tetrahydrofolate interconversion. Its function is as follows. Catalyzes the oxidation of 5,10-methylenetetrahydrofolate to 5,10-methenyltetrahydrofolate and then the hydrolysis of 5,10-methenyltetrahydrofolate to 10-formyltetrahydrofolate. The polypeptide is Bifunctional protein FolD (Citrobacter koseri (strain ATCC BAA-895 / CDC 4225-83 / SGSC4696)).